We begin with the raw amino-acid sequence, 673 residues long: Annexin A6 (673 aa).

An N-acetylalanine modification is found at alanine 2. Serine 13 is modified (phosphoserine). 8 Annexin repeats span residues 20-91, 92-163, 175-247, 251-322, 363-434, 435-506, 521-595, and 599-670; these read FDAN…NLMR, PLAY…VLLQ, DLVQ…AVVK, STPE…KLCG, FNPD…GLMM, PPAH…SLAT, EDAQ…AIVQ, and NKPL…ALCG. Tyrosine 30 is modified (phosphotyrosine). An N6-acetyllysine mark is found at lysine 63, lysine 68, lysine 75, and lysine 81. Tyrosine 201 carries the post-translational modification Phosphotyrosine. N6-acetyllysine occurs at positions 306, 370, and 418. At serine 422 the chain carries Phosphoserine. Lysine 483 carries the N6-acetyllysine modification. Residue serine 537 is modified to Phosphoserine. Residue lysine 620 is modified to N6-acetyllysine.

Belongs to the annexin family.

It localises to the cytoplasm. The protein localises to the melanosome. Functionally, may associate with CD21. May regulate the release of Ca(2+) from intracellular stores. This chain is Annexin A6 (Anxa6), found in Rattus norvegicus (Rat).